Here is a 57-residue protein sequence, read N- to C-terminus: Lantibiotic nisin-Z (57 aa).

Residues 1 to 23 (MSTKDFNLDLVSVSKKDSGASPR) constitute a propeptide that is removed on maturation. Threonine 25 bears the 2,3-didehydrobutyrine mark. Residues 26 to 30 (SISLC) constitute a cross-link (lanthionine (Ser-Cys)). Position 28 is a 2,3-didehydroalanine (Ser) (serine 28). Cross-links (beta-methyllanthionine (Thr-Cys)) lie at residues 31 to 34 (TPGC), 36 to 42 (TGALMGC), 46 to 49 (TATC), and 48 to 51 (TCNC). Serine 56 bears the 2,3-didehydroalanine (Ser) mark.

This sequence belongs to the type A lantibiotic family. Post-translationally, maturation of lantibiotics involves the enzymatic conversion of Thr, and Ser into dehydrated AA and the formation of thioether bonds with cysteine. This is followed by membrane translocation and cleavage of the modified precursor. The structure of the 2,3-didehydrobutyrine is not discussed in PubMed:15361862. It is probably the Z-isomer by similarity.

Lanthionine-containing peptide antibiotic (lantibiotic) active on Gram-positive bacteria. The bactericidal activity of lantibiotics is based on depolarization of energized bacterial cytoplasmic membranes, initiated by the formation of aqueous transmembrane pores. The chain is Lantibiotic nisin-Z (nisZ) from Lactococcus lactis subsp. lactis (Streptococcus lactis).